We begin with the raw amino-acid sequence, 254 residues long: 14-3-3-like protein RA215 (254 aa).

The protein belongs to the 14-3-3 family.

The sequence is that of 14-3-3-like protein RA215 from Solanum tuberosum (Potato).